A 55-amino-acid chain; its full sequence is MAKAVTIKVKLVSSADTGFYYVAKKNSRTMTEKMVKKKYDPVARKHVEFREAKIK.

It belongs to the bacterial ribosomal protein bL33 family.

The chain is Large ribosomal subunit protein bL33 from Bradyrhizobium sp. (strain BTAi1 / ATCC BAA-1182).